The following is a 282-amino-acid chain: Pantothenate synthetase (282 aa).

Position 30–37 (30–37 (MGYLHAGH)) interacts with ATP. The active-site Proton donor is histidine 37. Residue glutamine 61 coordinates (R)-pantoate. Glutamine 61 contacts beta-alanine. 147–150 (GKKD) is a binding site for ATP. A (R)-pantoate-binding site is contributed by glutamine 153. Residues valine 176 and 184 to 187 (MSSR) contribute to the ATP site.

Belongs to the pantothenate synthetase family. In terms of assembly, homodimer.

The protein localises to the cytoplasm. The catalysed reaction is (R)-pantoate + beta-alanine + ATP = (R)-pantothenate + AMP + diphosphate + H(+). It functions in the pathway cofactor biosynthesis; (R)-pantothenate biosynthesis; (R)-pantothenate from (R)-pantoate and beta-alanine: step 1/1. Catalyzes the condensation of pantoate with beta-alanine in an ATP-dependent reaction via a pantoyl-adenylate intermediate. This chain is Pantothenate synthetase, found in Geotalea uraniireducens (strain Rf4) (Geobacter uraniireducens).